The sequence spans 435 residues: E3 ubiquitin-protein ligase RING1 (435 aa).

The RING-type zinc finger occupies 46-86 (CPICLDMLKKTMTTKECLHRFCSDCIVTALRSGNKECPTCR). The disordered stretch occupies residues 144-322 (KLQSQNRPQR…TEGEGNGELG (179 aa)). Residues 157–170 (KGGGGGGGGGGNGN) are compositionally biased toward gly residues. Composition is skewed to low complexity over residues 171–188 (GAANVAAPPAPGAPTAVG), 202–211 (SNDSNSNTNS), 222–251 (SGTSAASAITSASNAAPSSSANSGASTSAT), and 259–278 (SNPPSVRSTPSPVPSNSSSS). Serine 202 bears the Phosphoserine mark. A Phosphoserine modification is found at serine 266. Phosphothreonine is present on threonine 267. Serine 269 is modified (phosphoserine). The segment covering 309 to 322 (SNIDTEGEGNGELG) has biased composition (acidic residues).

Interacts with ORD. Component of PRC1 complex, which contains many PcG proteins like Pc, ph, Scm, Psc, Sce and also chromatin remodeling proteins such as histone deacetylases. This complex is distinct from the Esc/E(z) complex, at least composed of esc, E(z), Su(z)12, HDAC1/Rpd3 and Caf1-55. The two complexes however cooperate and interact together during the first 3 hours of development to establish PcG silencing. As to expression, ubiquitously expressed in syncytial blastoderm embryos. Ubiquitously expressed until stage 11. Then, it is only expressed in the neuroectoderm. Later in embryonic development, it is only expressed in the CNS. In larvae, it is expressed in all imaginal disks. Expressed in the male and female gonads.

It is found in the nucleus. The protein resides in the chromosome. The catalysed reaction is S-ubiquitinyl-[E2 ubiquitin-conjugating enzyme]-L-cysteine + [acceptor protein]-L-lysine = [E2 ubiquitin-conjugating enzyme]-L-cysteine + N(6)-ubiquitinyl-[acceptor protein]-L-lysine.. It functions in the pathway protein modification; protein ubiquitination. In terms of biological role, E3 ubiquitin-protein ligase that mediates monoubiquitination of 'Lys-118' of histone H2A, thereby playing a central role in histone code and gene regulation. H2A 'Lys-118' ubiquitination gives a specific tag for epigenetic transcriptional repression. Polycomb group (PcG) protein. PcG proteins act by forming multiprotein complexes, which are required to maintain the transcriptionally repressive state of homeotic genes throughout development. PcG proteins are not required to initiate repression, but to maintain it during later stages of development. PcG complexes act via modification of histones, such as methylation, deacetylation, ubiquitination rendering chromatin heritably changed in its expressibility. May play a role in meiotic sister chromatid cohesion. This Drosophila melanogaster (Fruit fly) protein is E3 ubiquitin-protein ligase RING1 (Sce).